The sequence spans 338 residues: Glyceraldehyde-3-phosphate dehydrogenase (338 aa).

NAD(+) is bound by residues 11–12 (TI) and Gly-111. Residue 140-142 (SCN) participates in D-glyceraldehyde 3-phosphate binding. Cys-141 acts as the Nucleophile in catalysis. Arg-169 lines the NAD(+) pocket. 195–196 (HG) lines the D-glyceraldehyde 3-phosphate pocket. Residue Gln-302 coordinates NAD(+).

It belongs to the glyceraldehyde-3-phosphate dehydrogenase family. As to quaternary structure, homotetramer.

The protein localises to the cytoplasm. The catalysed reaction is D-glyceraldehyde 3-phosphate + phosphate + NADP(+) = (2R)-3-phospho-glyceroyl phosphate + NADPH + H(+). It carries out the reaction D-glyceraldehyde 3-phosphate + phosphate + NAD(+) = (2R)-3-phospho-glyceroyl phosphate + NADH + H(+). It participates in carbohydrate degradation; glycolysis; pyruvate from D-glyceraldehyde 3-phosphate: step 1/5. This Methanobacterium bryantii protein is Glyceraldehyde-3-phosphate dehydrogenase (gap).